The primary structure comprises 556 residues: Oxygen-dependent choline dehydrogenase (556 aa).

4 to 33 (DYIIIGAGSAGNVLATRLTEDPNTSVLLLE) contacts FAD. His-473 (proton acceptor) is an active-site residue.

The protein belongs to the GMC oxidoreductase family. FAD is required as a cofactor.

It carries out the reaction choline + A = betaine aldehyde + AH2. The catalysed reaction is betaine aldehyde + NAD(+) + H2O = glycine betaine + NADH + 2 H(+). It functions in the pathway amine and polyamine biosynthesis; betaine biosynthesis via choline pathway; betaine aldehyde from choline (cytochrome c reductase route): step 1/1. In terms of biological role, involved in the biosynthesis of the osmoprotectant glycine betaine. Catalyzes the oxidation of choline to betaine aldehyde and betaine aldehyde to glycine betaine at the same rate. This Escherichia coli O139:H28 (strain E24377A / ETEC) protein is Oxygen-dependent choline dehydrogenase.